We begin with the raw amino-acid sequence, 122 residues long: Large ribosomal subunit protein uL18 (122 aa).

The segment covering 1-21 (MSKLSRKQQTQKRHRRLRRHL) has biased composition (basic residues). The tract at residues 1–26 (MSKLSRKQQTQKRHRRLRRHLTGTSD) is disordered.

It belongs to the universal ribosomal protein uL18 family. As to quaternary structure, part of the 50S ribosomal subunit; part of the 5S rRNA/L5/L18/L25 subcomplex. Contacts the 5S and 23S rRNAs.

Functionally, this is one of the proteins that bind and probably mediate the attachment of the 5S RNA into the large ribosomal subunit, where it forms part of the central protuberance. The chain is Large ribosomal subunit protein uL18 from Parasynechococcus marenigrum (strain WH8102).